A 93-amino-acid polypeptide reads, in one-letter code: DNA-directed RNA polymerase subunit omega (93 aa).

It belongs to the RNA polymerase subunit omega family. As to quaternary structure, the RNAP catalytic core consists of 2 alpha, 1 beta, 1 beta' and 1 omega subunit. When a sigma factor is associated with the core the holoenzyme is formed, which can initiate transcription.

It carries out the reaction RNA(n) + a ribonucleoside 5'-triphosphate = RNA(n+1) + diphosphate. Its function is as follows. Promotes RNA polymerase assembly. Latches the N- and C-terminal regions of the beta' subunit thereby facilitating its interaction with the beta and alpha subunits. In Acinetobacter baylyi (strain ATCC 33305 / BD413 / ADP1), this protein is DNA-directed RNA polymerase subunit omega.